The sequence spans 453 residues: Putative sodium-coupled neutral amino acid transporter 11 (453 aa).

Over residues 1 to 10 (MSYQQPQLSG) the composition is skewed to polar residues. The segment at 1-34 (MSYQQPQLSGPLQRETDSSDRESLISGHEHGGKS) is disordered. Basic and acidic residues predominate over residues 14–32 (RETDSSDRESLISGHEHGG). The next 11 helical transmembrane spans lie at 39–59 (AVFN…PYSM), 66–86 (LGIL…VLLI), 106–126 (GFPG…IAMI), 150–170 (GWFI…TLPL), 179–199 (LGKI…IVMT), 222–242 (AIQA…CFLV), 262–282 (ILVS…TFTG), 299–319 (VTFG…IECF), 337–357 (VFHT…SLMI), 359–379 (CLGI…IFII), and 398–418 (IMAC…FVMA). Asn-438 and Asn-443 each carry an N-linked (GlcNAc...) asparagine glycan.

Belongs to the amino acid/polyamine transporter 2 family.

It localises to the membrane. Functionally, putative sodium-dependent amino acid/proton antiporter. This Mus musculus (Mouse) protein is Putative sodium-coupled neutral amino acid transporter 11 (Slc38a11).